The sequence spans 266 residues: MVCLKLPGGSSLAALTVTLMVLSSRLAFAGDTRPRFLELRKSECHFFNGTERVRYLDRYFHNQEEFLRFDSDVGEYRAVTELGRPVAESWNSQKDLLEQKRGRVDNYCRHNYGVGESFTVQRRVHPQVTVYPAKTQPLQHHNLLVCSVSGFYPGSIEVRWFRNGQEEKAGVVSTGLIQNGDWTFQTLVMLETVPRSGEVYTCQVEHPSVTSALTVEWRARSESAQSKMLSGVGGFVLGLLFLGAGLFIYFRNQKGHSGLQPTGFLS.

An N-terminal signal peptide occupies residues 1–29; sequence MVCLKLPGGSSLAALTVTLMVLSSRLAFA. The beta-1 stretch occupies residues 30 to 124; it reads GDTRPRFLEL…GESFTVQRRV (95 aa). Over 30–227 the chain is Extracellular; sequence GDTRPRFLEL…RARSESAQSK (198 aa). Intrachain disulfides connect Cys44–Cys108 and Cys146–Cys202. The N-linked (GlcNAc...) asparagine glycan is linked to Asn48. The tract at residues 125 to 227 is beta-2; sequence HPQVTVYPAK…RARSESAQSK (103 aa). The region spanning 126 to 214 is the Ig-like C1-type domain; that stretch reads PQVTVYPAKT…EHPSVTSALT (89 aa). The chain crosses the membrane as a helical span at residues 228–248; it reads MLSGVGGFVLGLLFLGAGLFI. Over 249-266 the chain is Cytoplasmic; that stretch reads YFRNQKGHSGLQPTGFLS.

Belongs to the MHC class II family. As to quaternary structure, heterotrimer that consists of an alpha chain HLA-DRA, a beta chain HLA-DRB1 and a peptide (peptide-MHCII). Newly synthesized alpha and beta chains forms a heterodimer (MHCII) that associates with the CD74/invariant chain (Ii) in the endoplasmic reticulum (ER). Ii is a trimer composed of three subunits and each subunit interacts with one MHCII dimer, blocking the peptide-binding cleft. As a result, MHCII molecules cannot bind peptides present in the ER. The complex of MHCII and CD74/Ii is transported in vesicles from ER to Golgi to lysosomes, where it encounters antigenic peptides generated via proteolysis of endocytosed antigens. MHCII dimers are dissociated from CD74/Ii by the combined action of proteolysis and HLA-DM. Lysosomal enzymes such as cathepsin, degrade CD74/Ii leaving a 24 amino acid remnant called class II-associated Ii or CLIP. Interacts (via the peptide binding cleft) with CLIP; this interaction inhibits antigen peptide binding before entry in the endosomal compartment. The displacement of CLIP and replacement by a high affinity peptide in lysosomes is performed by HLA-DM heterodimer. HLA-DM catalyzes CLIP dissociation from MHCII, stabilizes empty MHCII and mediates the selection of high affinity peptides. Interacts with HLA-DM heterodimer; this interaction is direct. Interacts with TCR (via CDR3). Interacts (via beta-2 domain) with CD4 coreceptor (via Ig-like V-type domain); this interaction is of exceptionally low affinity yet necessary for optimal recognition of antigenic peptides. In terms of processing, ubiquitinated by MARCHF1 and MARCHF8 at Lys-254 leading to sorting into the endosome system and down-regulation of MHC class II. As to expression, expressed in professional APCs: monocyte/macrophages, dendritic cells and B cells (at protein level).

The protein localises to the cell membrane. Its subcellular location is the endoplasmic reticulum membrane. It localises to the lysosome membrane. The protein resides in the late endosome membrane. It is found in the autolysosome membrane. Functionally, a beta chain of antigen-presenting major histocompatibility complex class II (MHCII) molecule. In complex with the alpha chain HLA-DRA, displays antigenic peptides on professional antigen presenting cells (APCs) for recognition by alpha-beta T cell receptor (TCR) on HLA-DRB3-restricted CD4-positive T cells. This guides antigen-specific T-helper effector functions, both antibody-mediated immune response and macrophage activation, to ultimately eliminate the infectious agents and transformed cells. Typically presents extracellular peptide antigens of 10 to 30 amino acids that arise from proteolysis of endocytosed antigens in lysosomes. In the tumor microenvironment, presents antigenic peptides that are primarily generated in tumor-resident APCs likely via phagocytosis of apoptotic tumor cells or macropinocytosis of secreted tumor proteins. Presents peptides derived from intracellular proteins that are trapped in autolysosomes after macroautophagy, a mechanism especially relevant for T cell selection in the thymus and central immune tolerance. The selection of the immunodominant epitopes follows two processing modes: 'bind first, cut/trim later' for pathogen-derived antigenic peptides and 'cut first, bind later' for autoantigens/self-peptides. The anchor residue at position 1 of the peptide N-terminus, usually a large hydrophobic residue, is essential for high affinity interaction with MHCII molecules. In terms of biological role, ALLELE DRB3*01:01: Exclusively presents several immunogenic epitopes derived from C.tetani neurotoxin tetX, playing a significant role in immune recognition and long-term protection. Presents viral epitopes derived from HHV-6B U11, TRX2/U56 and U85 antigens to polyfunctional CD4-positive T cells with cytotoxic activity implicated in control of HHV-6B infection. ALLELE DRB3*02:02 Exclusively presents several immunogenic epitopes derived from C.tetani neurotoxin tetX, playing a significant role in immune recognition and long-term protection. Upon EBV infection, presents to CD4-positive T cells latent antigen EBNA2 (PRSPTVFYNIPPMPLPPSQL) and lytic antigen BZLF1 (LTAYHVSTAPTGSWF) peptides, driving oligoclonal expansion and selection of virus-specific memory T cell subsets with cytotoxic potential to directly eliminate virus-infected B cells. Presents viral epitopes derived from HHV-6B U11, gB/U39 and gH/U48 antigens to polyfunctional CD4-positive T cells with cytotoxic activity implicated in control of HHV-6B infection. Plays a minor role in CD4-positive T cell immune response against Dengue virus by presenting conserved peptides from capsid and non-structural NS3 proteins. Displays peptides derived from IAV matrix protein M, implying a role in protection against IAV infection. In the context of tumor immunesurveillance, may present to T-helper 1 cells an immunogenic epitope derived from tumor-associated antigen WT1 (KRYFKLSHLQMHSRKH), likely providing for effective antitumor immunity in a wide range of solid and hematological malignancies. Presents to Vbeta2-positive T-helper 1 cells specifically an immunodominant peptide derived from tumor antigen CTAG1A/NY-ESO-1(PGVLLKEFTVSGNILTIRLTAADHR) and confers protective memory response. In metastatic epithelial tumors, presents to intratumoral CD4-positive T cells a TP53 neoantigen (HYNYMCNSSCMGSMNRRPILTIITL) carrying G245S hotspot driver mutation and may mediate tumor regression. Its function is as follows. ALLELE DRB3*03:01: Presents a series of conserved peptides derived from the M.tuberculosis PPE family of proteins, in particular PPE29 and PPE33, known to be highly immunogenic. Presents immunogenic epitopes derived from C.tetani neurotoxin tetX, playing a role in immune recognition and long-term protection. Displays immunodominant viral peptides from HCV non-structural protein NS2, as part of a broad range T-helper response to resolve infection. The polypeptide is HLA class II histocompatibility antigen, DR beta 3 chain (HLA-DRB3) (Homo sapiens (Human)).